The sequence spans 87 residues: Small ribosomal subunit protein eS21 (87 aa).

M1 carries the post-translational modification N-acetylmethionine.

This sequence belongs to the eukaryotic ribosomal protein eS21 family. Component of the small ribosomal subunit (SSU). Mature yeast ribosomes consist of a small (40S) and a large (60S) subunit. The 40S small subunit contains 1 molecule of ribosomal RNA (18S rRNA) and at least 33 different proteins. The large 60S subunit contains 3 rRNA molecules (25S, 5.8S and 5S rRNA) and at least 46 different proteins. Interacts with uS2A and uS2B, strongest interaction is with uS2B.

The protein resides in the cytoplasm. Its subcellular location is the nucleus. Its function is as follows. Component of the ribosome, a large ribonucleoprotein complex responsible for the synthesis of proteins in the cell. The small ribosomal subunit (SSU) binds messenger RNAs (mRNAs) and translates the encoded message by selecting cognate aminoacyl-transfer RNA (tRNA) molecules. The large subunit (LSU) contains the ribosomal catalytic site termed the peptidyl transferase center (PTC), which catalyzes the formation of peptide bonds, thereby polymerizing the amino acids delivered by tRNAs into a polypeptide chain. The nascent polypeptides leave the ribosome through a tunnel in the LSU and interact with protein factors that function in enzymatic processing, targeting, and the membrane insertion of nascent chains at the exit of the ribosomal tunnel. eS21 is required for the processing of the 20S rRNA-precursor to mature 18S rRNA in a late step of the maturation of 40S ribosomal subunits. Has a physiological role leading to 18S rRNA stability. The protein is Small ribosomal subunit protein eS21 (rps21) of Schizosaccharomyces pombe (strain 972 / ATCC 24843) (Fission yeast).